Reading from the N-terminus, the 43-residue chain is Protein PsbN (43 aa).

The helical transmembrane segment at 5–27 threads the bilayer; sequence TLIAIFISCSLVSFTGYALYTAF.

This sequence belongs to the PsbN family.

Its subcellular location is the plastid. It is found in the chloroplast thylakoid membrane. Its function is as follows. May play a role in photosystem I and II biogenesis. This is Protein PsbN from Lopidium concinnum (Moss).